The sequence spans 92 residues: PqqA binding protein (92 aa).

It belongs to the PqqD family. As to quaternary structure, monomer. Interacts with PqqE.

Its pathway is cofactor biosynthesis; pyrroloquinoline quinone biosynthesis. Functions as a PqqA binding protein and presents PqqA to PqqE, in the pyrroloquinoline quinone (PQQ) biosynthetic pathway. The polypeptide is PqqA binding protein (Xanthomonas euvesicatoria pv. vesicatoria (strain 85-10) (Xanthomonas campestris pv. vesicatoria)).